A 217-amino-acid chain; its full sequence is Cytidylate kinase (217 aa).

Position 10–18 (Gly-10–Thr-18) interacts with ATP.

It belongs to the cytidylate kinase family. Type 1 subfamily.

The protein localises to the cytoplasm. It carries out the reaction CMP + ATP = CDP + ADP. The catalysed reaction is dCMP + ATP = dCDP + ADP. The protein is Cytidylate kinase of Clostridium botulinum (strain Loch Maree / Type A3).